Here is a 183-residue protein sequence, read N- to C-terminus: Crossover junction endodeoxyribonuclease RuvC (183 aa).

Active-site residues include D7, E66, and D138. Residues D7, E66, and D138 each coordinate Mg(2+).

Belongs to the RuvC family. In terms of assembly, homodimer which binds Holliday junction (HJ) DNA. The HJ becomes 2-fold symmetrical on binding to RuvC with unstacked arms; it has a different conformation from HJ DNA in complex with RuvA. In the full resolvosome a probable DNA-RuvA(4)-RuvB(12)-RuvC(2) complex forms which resolves the HJ. Mg(2+) is required as a cofactor.

The protein resides in the cytoplasm. It catalyses the reaction Endonucleolytic cleavage at a junction such as a reciprocal single-stranded crossover between two homologous DNA duplexes (Holliday junction).. The RuvA-RuvB-RuvC complex processes Holliday junction (HJ) DNA during genetic recombination and DNA repair. Endonuclease that resolves HJ intermediates. Cleaves cruciform DNA by making single-stranded nicks across the HJ at symmetrical positions within the homologous arms, yielding a 5'-phosphate and a 3'-hydroxyl group; requires a central core of homology in the junction. The consensus cleavage sequence is 5'-(A/T)TT(C/G)-3'. Cleavage occurs on the 3'-side of the TT dinucleotide at the point of strand exchange. HJ branch migration catalyzed by RuvA-RuvB allows RuvC to scan DNA until it finds its consensus sequence, where it cleaves and resolves the cruciform DNA. The polypeptide is Crossover junction endodeoxyribonuclease RuvC (Burkholderia ambifaria (strain MC40-6)).